Here is a 135-residue protein sequence, read N- to C-terminus: Histone H3 (135 aa).

The interval 1 to 40 is disordered; the sequence is MARTKQTARKSTGGKAPRKAVATKARKTAPPVGGVKKPHR. The span at 19–31 shows a compositional bias: low complexity; the sequence is KAVATKARKTAPP.

Belongs to the histone H3 family. In terms of assembly, the nucleosome is a histone octamer containing two molecules each of H2A, H2B, H3 and H4 assembled in one H3-H4 heterotetramer and two H2A-H2B heterodimers. The octamer wraps approximately 147 bp of DNA.

The protein localises to the nucleus. It localises to the chromosome. Core component of nucleosome. Nucleosomes wrap and compact DNA into chromatin, limiting DNA accessibility to the cellular machineries which require DNA as a template. Histones thereby play a central role in transcription regulation, DNA repair, DNA replication and chromosomal stability. DNA accessibility is regulated via a complex set of post-translational modifications of histones, also called histone code, and nucleosome remodeling. This Mastigamoeba balamuthi (Phreatamoeba balamuthi) protein is Histone H3.